Consider the following 453-residue polypeptide: Magnesium transporter MgtE (453 aa).

At 1–286 (MNEGQEMEEQ…ENPLKAASKR (286 aa)) the chain is on the cytoplasmic side. Positions 71, 98, 102, 136, 140, 176, 227, 230, 233, 251, and 259 each coordinate Mg(2+). CBS domains lie at 142–205 (MTTE…IADI) and 206–262 (LNER…EAAS). Residues 287–307 (LPWLITLLFLGMSTASLISNY) traverse the membrane as a helical segment. A topological domain (extracellular) is located at residue Glu308. Residues 309–329 (SLVSEASILAVFISLITGTAG) traverse the membrane as a helical segment. The Cytoplasmic portion of the chain corresponds to 330–360 (NAGTQSLAVAVRRLAMKDEKDSNFGRLILSE). Residues 361–381 (VLTGLVTGAVTGLTIMIVVGV) form a helical membrane-spanning segment. Over 382–389 (WQHNLPLG) the chain is Extracellular. The chain crosses the membrane as a helical span at residues 390–410 (FVIGMAMLCAITVANLAGSLI). The Cytoplasmic portion of the chain corresponds to 411–427 (PMLMDKLGFDPAVASGP). A helical transmembrane segment spans residues 428 to 448 (FITTLSDLTSVLIYFNIASMF). Residue Asp434 coordinates Mg(2+). Residues 449–453 (MRYFV) are Extracellular-facing.

This sequence belongs to the SLC41A transporter family. As to quaternary structure, homodimer.

Its subcellular location is the cell membrane. It catalyses the reaction Mg(2+)(in) = Mg(2+)(out). In terms of biological role, acts as a magnesium transporter. The protein is Magnesium transporter MgtE of Enterococcus faecalis (strain ATCC 700802 / V583).